The following is a 468-amino-acid chain: ATP synthase subunit beta (468 aa).

155–162 (GGAGVGKT) lines the ATP pocket.

This sequence belongs to the ATPase alpha/beta chains family. F-type ATPases have 2 components, CF(1) - the catalytic core - and CF(0) - the membrane proton channel. CF(1) has five subunits: alpha(3), beta(3), gamma(1), delta(1), epsilon(1). CF(0) has three main subunits: a(1), b(2) and c(9-12). The alpha and beta chains form an alternating ring which encloses part of the gamma chain. CF(1) is attached to CF(0) by a central stalk formed by the gamma and epsilon chains, while a peripheral stalk is formed by the delta and b chains.

It is found in the cell membrane. It catalyses the reaction ATP + H2O + 4 H(+)(in) = ADP + phosphate + 5 H(+)(out). Functionally, produces ATP from ADP in the presence of a proton gradient across the membrane. The catalytic sites are hosted primarily by the beta subunits. The chain is ATP synthase subunit beta from Streptococcus pneumoniae (strain CGSP14).